A 119-amino-acid polypeptide reads, in one-letter code: Ribonuclease P protein component (119 aa).

It belongs to the RnpA family. In terms of assembly, consists of a catalytic RNA component (M1 or rnpB) and a protein subunit.

It carries out the reaction Endonucleolytic cleavage of RNA, removing 5'-extranucleotides from tRNA precursor.. Functionally, RNaseP catalyzes the removal of the 5'-leader sequence from pre-tRNA to produce the mature 5'-terminus. It can also cleave other RNA substrates such as 4.5S RNA. The protein component plays an auxiliary but essential role in vivo by binding to the 5'-leader sequence and broadening the substrate specificity of the ribozyme. This chain is Ribonuclease P protein component, found in Listeria monocytogenes serotype 4b (strain CLIP80459).